Consider the following 427-residue polypeptide: Adenylosuccinate synthetase (427 aa).

GTP-binding positions include 12-18 (GDEGKGK) and 40-42 (GHT). The active-site Proton acceptor is D13. Mg(2+) is bound by residues D13 and G40. IMP is bound by residues 13-16 (DEGK), 38-41 (NAGH), T128, R142, Q223, T238, and R302. Catalysis depends on H41, which acts as the Proton donor. 298-304 (TTTGRPR) provides a ligand contact to substrate. GTP-binding positions include R304, 330–332 (LLD), and 412–414 (SVG).

Belongs to the adenylosuccinate synthetase family. As to quaternary structure, homodimer. Requires Mg(2+) as cofactor.

It localises to the cytoplasm. The catalysed reaction is IMP + L-aspartate + GTP = N(6)-(1,2-dicarboxyethyl)-AMP + GDP + phosphate + 2 H(+). The protein operates within purine metabolism; AMP biosynthesis via de novo pathway; AMP from IMP: step 1/2. In terms of biological role, plays an important role in the de novo pathway of purine nucleotide biosynthesis. Catalyzes the first committed step in the biosynthesis of AMP from IMP. The sequence is that of Adenylosuccinate synthetase from Alkaliphilus metalliredigens (strain QYMF).